A 100-amino-acid chain; its full sequence is Enhancer of yellow 2 transcription factor (100 aa).

This sequence belongs to the ENY2 family. As to quaternary structure, component of the nuclear pore complex (NPC)-associated AMEX complex (anchoring and mRNA export complex), composed of at least e(y)2 and xmas-2. Component of the SAGA transcription coactivator-HAT complexes, at least composed of Ada2b, e(y)2, Pcaf/Gcn5, Taf10 and Nipped-A/Trrap. Within the SAGA complex, e(y)2, Sgf11, and not/nonstop form an additional subcomplex of SAGA called the DUB module (deubiquitination module). Component of the THO complex, composed of at least e(y)2, HPR1, THO2, THOC5, THOC6 and THOC7. Interacts with e(y)1. Interacts with su(Hw) (via zinc fingers). Interacts with xmas-2; required for localization to the nuclear periphery. Interacts with the nuclear pore complex (NPC).

The protein resides in the nucleus. Its subcellular location is the nucleoplasm. The protein localises to the cytoplasm. In terms of biological role, involved in mRNA export coupled transcription activation by association with both the AMEX and the SAGA complexes. The SAGA complex is a multiprotein complex that activates transcription by remodeling chromatin and mediating histone acetylation and deubiquitination. Within the SAGA complex, participates in a subcomplex that specifically deubiquitinates histone H2B. The SAGA complex is recruited to specific gene promoters by activators, where it is required for transcription. Required for nuclear receptor-mediated transactivation. Involved in transcription elongation by recruiting the THO complex onto nascent mRNA. The AMEX complex functions in docking export-competent ribonucleoprotein particles (mRNPs) to the nuclear entrance of the nuclear pore complex (nuclear basket). AMEX participates in mRNA export and accurate chromatin positioning in the nucleus by tethering genes to the nuclear periphery. This chain is Enhancer of yellow 2 transcription factor, found in Drosophila ananassae (Fruit fly).